The primary structure comprises 483 residues: MHQLTLAEIARGLADKKFSSEELTKVLLARITQLDPQLNSFISLTEELALEQAKAADVRRANGESGALLGAPIAHKDLFCTQGIRTSCGSKMLDNFKAPYDATVVSKLAAAGTVTLGKTNMDEFAMGSANESSWYGAVKNPWNLEHVPGGSSGGSAAAVAARLLPAATATDTGGSIRQPAAFTNLTGLKPTYGRVSRWGMIAYASSLDQGGPLARTAEDCAILLQGMAGFDPNDSTSIDEPVPDYAAGLNGSLQGLRIGVPKEYFGAGLDPRIADLIQNSIKELQKLGAVIKEISLPNMQHAIPAYYVIAPAEASSNLSRFDGVRFGHRCADPKNLEDLYKRSRGEGFGPEVQRRIMVGAYALSAGYYDAYYLKAQKIRRLVKNDFMAAFNEVDIILGPTTPNPAWKLGAKNSDPVAAYLEDVYTITANLAGLPGLSMPAGFVDGLPVGVQLLAPYFQEGRLLNVAHQYQLNTDWHTRTPTGF.

Active-site charge relay system residues include lysine 76 and serine 151. Serine 175 acts as the Acyl-ester intermediate in catalysis.

This sequence belongs to the amidase family. GatA subfamily. In terms of assembly, heterotrimer of A, B and C subunits.

The enzyme catalyses L-glutamyl-tRNA(Gln) + L-glutamine + ATP + H2O = L-glutaminyl-tRNA(Gln) + L-glutamate + ADP + phosphate + H(+). In terms of biological role, allows the formation of correctly charged Gln-tRNA(Gln) through the transamidation of misacylated Glu-tRNA(Gln) in organisms which lack glutaminyl-tRNA synthetase. The reaction takes place in the presence of glutamine and ATP through an activated gamma-phospho-Glu-tRNA(Gln). This is Glutamyl-tRNA(Gln) amidotransferase subunit A from Pseudomonas fluorescens (strain Pf0-1).